Here is a 132-residue protein sequence, read N- to C-terminus: uncharacterized protein (132 aa).

The disordered stretch occupies residues 17–75 (RSAVPRWPHLSSQSGVEPPDRWTGTPGWPSRDQEAPGSMMPPAAAQPSAHGALVPPATA). The segment covering 51-65 (APGSMMPPAAAQPSA) has biased composition (low complexity).

Expressed exclusively in heart.

It localises to the cytoplasm. This is an uncharacterized protein from Homo sapiens (Human).